Reading from the N-terminus, the 183-residue chain is MELVVIAKPYANAIFELAQQDKSYLQWKMVLDAGAQLLIDEQMCKFIAFPNVLKQDKLSVIKELLKSILARELSGHEVTFIGILLNNNRINALPSIATLFESLINTTNDAKMFNVISAYQLSELEKKQIVRDLTNQYNKVVNIDAVIDKDLVGGVIIKDGDKVIDMSIKARVNELELRLSKTH.

Belongs to the ATPase delta chain family. In terms of assembly, F-type ATPases have 2 components, F(1) - the catalytic core - and F(0) - the membrane proton channel. F(1) has five subunits: alpha(3), beta(3), gamma(1), delta(1), epsilon(1). F(0) has three main subunits: a(1), b(2) and c(10-14). The alpha and beta chains form an alternating ring which encloses part of the gamma chain. F(1) is attached to F(0) by a central stalk formed by the gamma and epsilon chains, while a peripheral stalk is formed by the delta and b chains.

It is found in the cell inner membrane. F(1)F(0) ATP synthase produces ATP from ADP in the presence of a proton or sodium gradient. F-type ATPases consist of two structural domains, F(1) containing the extramembraneous catalytic core and F(0) containing the membrane proton channel, linked together by a central stalk and a peripheral stalk. During catalysis, ATP synthesis in the catalytic domain of F(1) is coupled via a rotary mechanism of the central stalk subunits to proton translocation. In terms of biological role, this protein is part of the stalk that links CF(0) to CF(1). It either transmits conformational changes from CF(0) to CF(1) or is implicated in proton conduction. This Ruthia magnifica subsp. Calyptogena magnifica protein is ATP synthase subunit delta.